An 82-amino-acid polypeptide reads, in one-letter code: Large ribosomal subunit protein uL29 (82 aa).

Belongs to the universal ribosomal protein uL29 family.

This chain is Large ribosomal subunit protein uL29, found in Trichodesmium erythraeum (strain IMS101).